The sequence spans 222 residues: Cytochrome b6 (222 aa).

Residues 39 to 59 (IFYCLGGITLVCFLIQFATGF) form a helical membrane-spanning segment. Heme c is bound at residue Cys42. Residues His93 and His107 each contribute to the heme b site. 3 helical membrane-spanning segments follow: residues 97 to 117 (ASMMVLMMILHTFRVYLTGGF), 123 to 143 (LTWVTGVVMAVITVSFGVTGY), and 193 to 213 (LHTFVLPWFIAVFMLLHFLMI). Residues His194 and His209 each contribute to the heme b site.

Belongs to the cytochrome b family. PetB subfamily. As to quaternary structure, the 4 large subunits of the cytochrome b6-f complex are cytochrome b6, subunit IV (17 kDa polypeptide, PetD), cytochrome f and the Rieske protein, while the 4 small subunits are PetG, PetL, PetM and PetN. The complex functions as a dimer. Heme b is required as a cofactor. It depends on heme c as a cofactor.

It is found in the cellular thylakoid membrane. Its function is as follows. Component of the cytochrome b6-f complex, which mediates electron transfer between photosystem II (PSII) and photosystem I (PSI), cyclic electron flow around PSI, and state transitions. The polypeptide is Cytochrome b6 (Trichodesmium erythraeum (strain IMS101)).